A 113-amino-acid polypeptide reads, in one-letter code: MSILGLFQKRSSGAVARDRLQLILAHERAESGRPDLVIQLREEILAVIANHVAVEPDKVKVTLERGEGVSTLGLDIELPLGASGKLDAKLAAKLAEVAANKGGAKPASSKKAA.

Belongs to the MinE family.

Its function is as follows. Prevents the cell division inhibition by proteins MinC and MinD at internal division sites while permitting inhibition at polar sites. This ensures cell division at the proper site by restricting the formation of a division septum at the midpoint of the long axis of the cell. The protein is Cell division topological specificity factor of Methylobacterium radiotolerans (strain ATCC 27329 / DSM 1819 / JCM 2831 / NBRC 15690 / NCIMB 10815 / 0-1).